The chain runs to 642 residues: Threonine--tRNA ligase (642 aa).

A TGS domain is found at 1–63 (MSTVTVTLPD…TADVELEIVT (63 aa)). A catalytic region spans residues 242–533 (DHRKIGQEMD…LTEHYNGKFP (292 aa)). 3 residues coordinate Zn(2+): Cys-334, His-385, and His-510.

This sequence belongs to the class-II aminoacyl-tRNA synthetase family. Homodimer. Zn(2+) serves as cofactor.

Its subcellular location is the cytoplasm. The catalysed reaction is tRNA(Thr) + L-threonine + ATP = L-threonyl-tRNA(Thr) + AMP + diphosphate + H(+). Functionally, catalyzes the attachment of threonine to tRNA(Thr) in a two-step reaction: L-threonine is first activated by ATP to form Thr-AMP and then transferred to the acceptor end of tRNA(Thr). The polypeptide is Threonine--tRNA ligase (Haloarcula marismortui (strain ATCC 43049 / DSM 3752 / JCM 8966 / VKM B-1809) (Halobacterium marismortui)).